Reading from the N-terminus, the 279-residue chain is MDPQNKSPKPQVKSTRLVVKKQPAGVVFPKLSIPVNDFEKTVTLTRAQKKEAKLLKKAQRKANKLNNKQDSTFFNSASGETNNTILPPGVKNQADNKTNRFSKFISFFTSSKNKQPDEITERLVDDPTVKNRFSAFNKKLIWVLKDKKLRARAWKIVGYTNLVIVAFFAGLLAVMNKFITLSSVEYPAIALQLPINNALWGISIFVISIVTLPFWTMFILFLMGVKDVRTSRSIHYFIWIVLIINVVLLLVSCLLMIAAYAHLDGYNIWRNLESLNPNN.

The disordered stretch occupies residues 60–92 (RKANKLNNKQDSTFFNSASGETNNTILPPGVKN). Over residues 70-85 (DSTFFNSASGETNNTI) the composition is skewed to polar residues. 3 helical membrane passes run 156–176 (IVGY…AVMN), 202–222 (ISIF…ILFL), and 237–257 (FIWI…LLMI).

It is found in the cell membrane. This is an uncharacterized protein from Mycoplasma genitalium (strain ATCC 33530 / DSM 19775 / NCTC 10195 / G37) (Mycoplasmoides genitalium).